Reading from the N-terminus, the 664-residue chain is Protein cueball (664 aa).

Positions 1–21 are cleaved as a signal peptide; it reads MRNLGIAVTFAVLLVIGYVTA. The Extracellular portion of the chain corresponds to 22-552; that stretch reads LEWDAVVTTD…VTYCKNSFNR (531 aa). 3 N-linked (GlcNAc...) asparagine glycosylation sites follow: Asn40, Asn140, and Asn188. 3 LDL-receptor class B repeats span residues 115 to 157, 168 to 211, and 212 to 257; these read RKLY…ENHD, RHLY…DHYN, and NRIY…NSQY. EGF-like domains lie at 367–399, 402–438, and 473–510; these read EIPICNNFCVHGECVVGADSRPMCKCHAEFEGE, DRNICDGYCLNNGRCALSATGQRSCTCSKNFSGARCE, and EEYTCNNYCLHDGTCILNNDTMLVECRCGSEYTGKRCE. Disulfide bonds link Cys371/Cys380, Cys375/Cys390, Cys406/Cys416, Cys410/Cys426, Cys428/Cys437, Cys477/Cys487, Cys481/Cys498, and Cys500/Cys509. N-linked (GlcNAc...) asparagine glycosylation occurs at Asn431. Asn491 is a glycosylation site (N-linked (GlcNAc...) asparagine). Asn551 is a glycosylation site (N-linked (GlcNAc...) asparagine). A helical membrane pass occupies residues 553–573; it reads TVVYVSLAFTASLVTLVTILC. Residues 574–664 lie on the Cytoplasmic side of the membrane; that stretch reads TVRRMYERNR…KLPSCVAEKN (91 aa).

It belongs to the cueball family.

It is found in the cell membrane. Its function is as follows. Has a role in spermatogenesis and oogenesis. This chain is Protein cueball, found in Aedes aegypti (Yellowfever mosquito).